The following is a 283-amino-acid chain: Thymidylate synthase (283 aa).

DUMP-binding positions include R31 and 145–146 (RR). C165 acts as the Nucleophile in catalysis. Residues 185–188 (RSAD), N196, and 226–228 (HIY) each bind dUMP. D188 contributes to the (6R)-5,10-methylene-5,6,7,8-tetrahydrofolate binding site. S282 contributes to the (6R)-5,10-methylene-5,6,7,8-tetrahydrofolate binding site.

Belongs to the thymidylate synthase family. Bacterial-type ThyA subfamily. As to quaternary structure, homodimer.

The protein resides in the cytoplasm. It carries out the reaction dUMP + (6R)-5,10-methylene-5,6,7,8-tetrahydrofolate = 7,8-dihydrofolate + dTMP. It participates in pyrimidine metabolism; dTTP biosynthesis. Functionally, catalyzes the reductive methylation of 2'-deoxyuridine-5'-monophosphate (dUMP) to 2'-deoxythymidine-5'-monophosphate (dTMP) while utilizing 5,10-methylenetetrahydrofolate (mTHF) as the methyl donor and reductant in the reaction, yielding dihydrofolate (DHF) as a by-product. This enzymatic reaction provides an intracellular de novo source of dTMP, an essential precursor for DNA biosynthesis. The polypeptide is Thymidylate synthase (Symbiobacterium thermophilum (strain DSM 24528 / JCM 14929 / IAM 14863 / T)).